Consider the following 504-residue polypeptide: ATP synthase subunit alpha (504 aa).

Position 169–176 (169–176) interacts with ATP; it reads GDRQIGKT.

It belongs to the ATPase alpha/beta chains family. In terms of assembly, F-type ATPases have 2 components, CF(1) - the catalytic core - and CF(0) - the membrane proton channel. CF(1) has five subunits: alpha(3), beta(3), gamma(1), delta(1), epsilon(1). CF(0) has three main subunits: a(1), b(2) and c(9-12). The alpha and beta chains form an alternating ring which encloses part of the gamma chain. CF(1) is attached to CF(0) by a central stalk formed by the gamma and epsilon chains, while a peripheral stalk is formed by the delta and b chains.

The protein resides in the cell membrane. It catalyses the reaction ATP + H2O + 4 H(+)(in) = ADP + phosphate + 5 H(+)(out). Its function is as follows. Produces ATP from ADP in the presence of a proton gradient across the membrane. The alpha chain is a regulatory subunit. The protein is ATP synthase subunit alpha of Syntrophomonas wolfei subsp. wolfei (strain DSM 2245B / Goettingen).